A 249-amino-acid polypeptide reads, in one-letter code: Nodulation protein H (249 aa).

In terms of biological role, required for the formation of sulfated nod factor. Proposed to transfer activated sulfate (PAPS) to a N-acetylglucosamine of the nod factor. This chain is Nodulation protein H (nodH), found in Rhizobium tropici.